The chain runs to 836 residues: Homeobox-leucine zipper protein ATHB-15 (836 aa).

The segment at residues 14-77 (DNGKYVRYTP…NRRCREKQRK (64 aa)) is a DNA-binding region (homeobox). Positions 72 to 115 (REKQRKEASRLQAVNRKLTAMNKLLMEENDRLQKQVSQLVHENS) form a coiled coil. The START domain maps to 151 to 379 (RDASPAGLLS…IAQEVTQTNS (229 aa)).

It belongs to the HD-ZIP homeobox family. Class III subfamily. In terms of assembly, interacts with ESR1 and ESR2. Interacts with ZPR3. As to expression, highly expressed the developing vascular elements and the adaxial portion of cotyledons. Expressed in developing ovules, stamens and carpels. Expressed in procambium and shoot meristem.

Its subcellular location is the nucleus. In terms of biological role, probable transcription factor involved in the regulation of meristem development to promote lateral organ formation. May regulates procambial and vascular tissue formation or maintenance, and vascular development in inflorescence stems. This is Homeobox-leucine zipper protein ATHB-15 (ATHB-15) from Arabidopsis thaliana (Mouse-ear cress).